Consider the following 271-residue polypeptide: OX-2 membrane glycoprotein homolog (271 aa).

The N-terminal stretch at 1–24 is a signal peptide; that stretch reads MSSLFISLPWVAFIWLALLGAVGG. Over 25–227 the chain is Extracellular; the sequence is ARVQGPMRGS…QGPLAHDLPA (203 aa). The Ig-like V-type domain maps to 26–129; that stretch reads RVQGPMRGSA…SCTACLEVTS (104 aa). Residues Cys39 and Cys109 are joined by a disulfide bond. 6 N-linked (GlcNAc...) asparagine; by host glycosylation sites follow: Asn83, Asn91, Asn138, Asn157, Asn166, and Asn208. One can recognise an Ig-like C2-type domain in the interval 130 to 220; that stretch reads PPTGHVQVNS…ISIPASIQGP (91 aa). An intrachain disulfide couples Cys148 to Cys202. A helical transmembrane segment spans residues 228–248; that stretch reads AQGTLAGVAITLVGLFGIFAL. The Cytoplasmic segment spans residues 249 to 271; that stretch reads HHCRRKQGGASPTSDDMDPLSTQ.

Interacts with human CD200R1. Post-translationally, N-glycosylated.

It is found in the host cell membrane. In terms of biological role, dramatically stimulates primary monocytes, macrophages, and dendritic cells to produce the inflammatory cytokines interleukin 1-beta, IL-6, monocyte chemoattractant protein 1, and TNF-alpha. The induction of inflammatory cytokine production potentially promotes the cytokine-mediated angiogenic proliferation of KSHV-infected cells. The protein is OX-2 membrane glycoprotein homolog (K14) of Human herpesvirus 8 type P (isolate GK18) (HHV-8).